Reading from the N-terminus, the 273-residue chain is Nitrogenase iron protein 5 (273 aa).

An ATP-binding site is contributed by 8-15 (GKGGIGKS). C94 lines the [4Fe-4S] cluster pocket. R97 carries the ADP-ribosylarginine; by dinitrogenase reductase ADP-ribosyltransferase modification. Residue C129 coordinates [4Fe-4S] cluster.

This sequence belongs to the NifH/BchL/ChlL family. In terms of assembly, homodimer. [4Fe-4S] cluster serves as cofactor. Post-translationally, the reversible ADP-ribosylation of Arg-97 inactivates the nitrogenase reductase and regulates nitrogenase activity.

The catalysed reaction is N2 + 8 reduced [2Fe-2S]-[ferredoxin] + 16 ATP + 16 H2O = H2 + 8 oxidized [2Fe-2S]-[ferredoxin] + 2 NH4(+) + 16 ADP + 16 phosphate + 6 H(+). In terms of biological role, the key enzymatic reactions in nitrogen fixation are catalyzed by the nitrogenase complex, which has 2 components: the iron protein and the molybdenum-iron protein. The protein is Nitrogenase iron protein 5 (nifH5) of Clostridium pasteurianum.